We begin with the raw amino-acid sequence, 543 residues long: Pectate disaccharide-lyase (543 aa).

This sequence belongs to the polysaccharide lyase 2 family. The cofactor is Cu cation. Mn(2+) serves as cofactor. Requires Ni(2+) as cofactor.

It is found in the cytoplasm. It catalyses the reaction [(1-&gt;4)-alpha-D-galacturonosyl](n) = 4-(4-deoxy-alpha-D-galact-4-enuronosyl)-D-galacturonate + [(1-&gt;4)-alpha-D-galacturonosyl](n-2). It functions in the pathway glycan metabolism; pectin degradation. In terms of biological role, catalyzes the formation of unsaturated digalacturonates from polygalacturonate or short oligogalacturonates. The sequence is that of Pectate disaccharide-lyase (pelW) from Dickeya dadantii (strain 3937) (Erwinia chrysanthemi (strain 3937)).